Consider the following 403-residue polypeptide: Poly(rC)-binding protein 4 (403 aa).

3 consecutive KH domains span residues Thr17 to Gly67, Pro101 to Gly154, and Thr241 to Gly293.

Widely expressed, with highest levels in testis and lowest in heart.

It localises to the cytoplasm. Its function is as follows. Single-stranded nucleic acid binding protein that binds preferentially to oligo dC. The chain is Poly(rC)-binding protein 4 (Pcbp4) from Mus musculus (Mouse).